A 159-amino-acid chain; its full sequence is U-actitoxin-Avd13a/b (159 aa).

The first 18 residues, 1-18, serve as a signal peptide directing secretion; that stretch reads MKSIFLVFFAVCLVKAEA. A propeptide spanning residues 19 to 26 is cleaved from the precursor; the sequence is GKGRKREP. Disulfide bonds link Cys-33-Cys-45 and Cys-36-Cys-52. The propeptide occupies 59 to 60; the sequence is EP. Cystine bridges form between Cys-67–Cys-79 and Cys-70–Cys-86. The propeptide occupies 93-94; that stretch reads EP. Disulfide bonds link Cys-101–Cys-113 and Cys-104–Cys-120. Residues 127–128 constitute a propeptide that is removed on maturation; the sequence is EP. Disulfide bonds link Cys-135-Cys-147 and Cys-138-Cys-154.

This sequence belongs to the sea anemone BBH family.

It is found in the secreted. Its subcellular location is the nematocyst. Functionally, inhibits ion channels. This is U-actitoxin-Avd13a/b from Anemonia viridis (Snakelocks anemone).